Consider the following 425-residue polypeptide: MLDLKKLRSNTEEVKKALSNRGEDFDVNVIDEVIALDEERRKILVDVEALKKQRNEVSAEIPKRKKAGEDVTEVMAEMREIGDKIKADDAKVAELNDKINYIMLRIPNIPNPAVPEGETDEDNVEIKRWGEPTKFNFEPKAHWDLGTDLDLLDFERGGKVAGSRFTVYKGMGARLERSIINYFLDKHTFENGYTEVLPPYMVNRDSMTGTGQLPKFEEDAFKVENNGYFLIPTAEVPVTNMYRNETLEGDKLPIKHAAYSACFRAEAGSAGRDTRGLIRQHQFNKVELVKFCKPEQSYEELDKLVQDAESVLQGLGLPYRIVRICKGDLGFTAALKYDIEVWMPSYNRYVEISSCSNFEDFQARRANIKYKNSPKEKPQFVHTLNGSGVAIGRTVAAILENYQQEDGSVVIPEALKEYMRCDLLK.

233–235 contacts L-serine; that stretch reads TAE. 264-266 provides a ligand contact to ATP; it reads RAE. Glutamate 287 serves as a coordination point for L-serine. 351 to 354 contacts ATP; that stretch reads EISS. Serine 387 is a binding site for L-serine.

The protein belongs to the class-II aminoacyl-tRNA synthetase family. Type-1 seryl-tRNA synthetase subfamily. In terms of assembly, homodimer. The tRNA molecule binds across the dimer.

The protein resides in the cytoplasm. It carries out the reaction tRNA(Ser) + L-serine + ATP = L-seryl-tRNA(Ser) + AMP + diphosphate + H(+). The catalysed reaction is tRNA(Sec) + L-serine + ATP = L-seryl-tRNA(Sec) + AMP + diphosphate + H(+). Its pathway is aminoacyl-tRNA biosynthesis; selenocysteinyl-tRNA(Sec) biosynthesis; L-seryl-tRNA(Sec) from L-serine and tRNA(Sec): step 1/1. Catalyzes the attachment of serine to tRNA(Ser). Is also able to aminoacylate tRNA(Sec) with serine, to form the misacylated tRNA L-seryl-tRNA(Sec), which will be further converted into selenocysteinyl-tRNA(Sec). The sequence is that of Serine--tRNA ligase from Clostridium perfringens (strain 13 / Type A).